The chain runs to 351 residues: Homeobox protein rough sheath 1 (351 aa).

3 disordered regions span residues methionine 1 to alanine 23, alanine 57 to methionine 82, and glycine 187 to glutamate 229. Residues alanine 57–glutamine 68 are compositionally biased toward low complexity. Basic and acidic residues predominate over residues proline 214–glutamate 229. In terms of domain architecture, ELK spans glutamate 232–phenylalanine 252. The homeobox; TALE-type DNA-binding region spans serine 253–serine 316.

The protein belongs to the TALE/KNOX homeobox family.

It is found in the nucleus. Plays a possible role in patterning the placement of lateral organs along the axis of the shoot. Mutations in RS1 alters cell fate and causes unregulated cell division and expansion in the leaf. Probably binds to the DNA sequence 5'-TGAC-3'. In Zea mays (Maize), this protein is Homeobox protein rough sheath 1 (RS1).